The sequence spans 320 residues: ATP-dependent 6-phosphofructokinase (320 aa).

Gly-12 serves as a coordination point for ATP. ADP-binding positions include 22 to 26 (RGVVR) and 55 to 60 (RYSVSD). ATP is bound by residues 73 to 74 (RF) and 103 to 106 (GDGS). Mg(2+) is bound at residue Asp-104. A substrate-binding site is contributed by 126–128 (TID). Asp-128 functions as the Proton acceptor in the catalytic mechanism. Position 155 (Arg-155) interacts with ADP. Residues Arg-163 and 170–172 (MGR) contribute to the substrate site. Residues 186–188 (GCE), Lys-212, and 214–216 (KKH) contribute to the ADP site. Residues Glu-223, Arg-244, and 250–253 (HIQR) each bind substrate.

It belongs to the phosphofructokinase type A (PFKA) family. ATP-dependent PFK group I subfamily. Prokaryotic clade 'B1' sub-subfamily. As to quaternary structure, homotetramer. It depends on Mg(2+) as a cofactor.

Its subcellular location is the cytoplasm. It carries out the reaction beta-D-fructose 6-phosphate + ATP = beta-D-fructose 1,6-bisphosphate + ADP + H(+). The protein operates within carbohydrate degradation; glycolysis; D-glyceraldehyde 3-phosphate and glycerone phosphate from D-glucose: step 3/4. With respect to regulation, allosterically activated by ADP and other diphosphonucleosides, and allosterically inhibited by phosphoenolpyruvate. Its function is as follows. Catalyzes the phosphorylation of D-fructose 6-phosphate to fructose 1,6-bisphosphate by ATP, the first committing step of glycolysis. The polypeptide is ATP-dependent 6-phosphofructokinase (Pectobacterium carotovorum subsp. carotovorum (strain PC1)).